The sequence spans 299 residues: tRNA dimethylallyltransferase (299 aa).

An ATP-binding site is contributed by 13–20 (GPTASGKT). Substrate is bound at residue 15 to 20 (TASGKT). An interaction with substrate tRNA region spans residues 38–41 (DSRQ).

Belongs to the IPP transferase family. Monomer. Mg(2+) is required as a cofactor.

It catalyses the reaction adenosine(37) in tRNA + dimethylallyl diphosphate = N(6)-dimethylallyladenosine(37) in tRNA + diphosphate. Functionally, catalyzes the transfer of a dimethylallyl group onto the adenine at position 37 in tRNAs that read codons beginning with uridine, leading to the formation of N6-(dimethylallyl)adenosine (i(6)A). This chain is tRNA dimethylallyltransferase, found in Synechococcus sp. (strain CC9605).